The sequence spans 787 residues: ATP-dependent zinc metalloprotease FtsH (787 aa).

Residues 1–5 lie on the Cytoplasmic side of the membrane; the sequence is MNRKN. Residues 6–26 form a helical membrane-spanning segment; sequence VIRMVTAIAVVVLLGWSFFYF. Residues 27–110 are Extracellular-facing; it reads SDDTRGYKFV…KVTTAVNEGS (84 aa). Residues 111 to 131 traverse the membrane as a helical segment; sequence ILGELLVYVLPLLLLVGLFVM. Topologically, residues 132-787 are cytoplasmic; the sequence is FSRMQGGARM…VSPSNPPAHG (656 aa). An ATP-binding site is contributed by 203 to 210; it reads GPPGTGKT. H425 is a binding site for Zn(2+). Residue E426 is part of the active site. Positions 429 and 501 each coordinate Zn(2+). The tract at residues 616–787 is disordered; that stretch reads DFGGRIPSDK…VSPSNPPAHG (172 aa). Composition is skewed to low complexity over residues 650-671 and 700-709; these read AFKAAIARASQAAEASHQAAQS and YGAPPGWHAP. Residues 710-720 are compositionally biased toward pro residues; it reads GWPPQQPPDYW. Positions 721–732 are enriched in low complexity; the sequence is YPPEQQPSQSPY. The span at 733-762 shows a compositional bias: pro residues; it reads WPQPAPSYPGQAPPPYPSYPPCPSYPPPGQ.

This sequence in the central section; belongs to the AAA ATPase family. It in the C-terminal section; belongs to the peptidase M41 family. As to quaternary structure, homohexamer. It depends on Zn(2+) as a cofactor.

The protein localises to the cell membrane. Acts as a processive, ATP-dependent zinc metallopeptidase for both cytoplasmic and membrane proteins. Plays a role in the quality control of integral membrane proteins. The chain is ATP-dependent zinc metalloprotease FtsH from Mycobacterium leprae (strain TN).